We begin with the raw amino-acid sequence, 457 residues long: tRNA(Ile)-lysidine synthase (457 aa).

27–32 (SGGLDS) contacts ATP.

Belongs to the tRNA(Ile)-lysidine synthase family.

Its subcellular location is the cytoplasm. It catalyses the reaction cytidine(34) in tRNA(Ile2) + L-lysine + ATP = lysidine(34) in tRNA(Ile2) + AMP + diphosphate + H(+). Functionally, ligates lysine onto the cytidine present at position 34 of the AUA codon-specific tRNA(Ile) that contains the anticodon CAU, in an ATP-dependent manner. Cytidine is converted to lysidine, thus changing the amino acid specificity of the tRNA from methionine to isoleucine. The protein is tRNA(Ile)-lysidine synthase of Hamiltonella defensa subsp. Acyrthosiphon pisum (strain 5AT).